The following is a 555-amino-acid chain: Urocanate hydratase (555 aa).

Residues 52–53 (GG), Gln130, 176–178 (GMG), Glu196, Arg201, 242–243 (NA), 263–267 (QTSAH), 273–274 (YL), and Tyr322 each bind NAD(+). Cys410 is a catalytic residue. Gly492 contacts NAD(+).

This sequence belongs to the urocanase family. NAD(+) is required as a cofactor.

It localises to the cytoplasm. It carries out the reaction 4-imidazolone-5-propanoate = trans-urocanate + H2O. The protein operates within amino-acid degradation; L-histidine degradation into L-glutamate; N-formimidoyl-L-glutamate from L-histidine: step 2/3. Functionally, catalyzes the conversion of urocanate to 4-imidazolone-5-propionate. The sequence is that of Urocanate hydratase from Shewanella sp. (strain W3-18-1).